A 94-amino-acid chain; its full sequence is ESAT-6-like protein EsxL (94 aa).

This sequence belongs to the WXG100 family. ESAT-6 subfamily. Strongly interacts with EsxK to form a heterodimeric complex under reducing conditions.

The protein resides in the secreted. This Mycobacterium bovis (strain ATCC BAA-935 / AF2122/97) protein is ESAT-6-like protein EsxL.